The primary structure comprises 377 residues: Alanine racemase (377 aa).

Catalysis depends on K37, which acts as the Proton acceptor; specific for D-alanine. K37 carries the N6-(pyridoxal phosphate)lysine modification. Substrate is bound at residue R135. Y271 serves as the catalytic Proton acceptor; specific for L-alanine. Substrate is bound at residue M319.

The protein belongs to the alanine racemase family. Pyridoxal 5'-phosphate is required as a cofactor.

It carries out the reaction L-alanine = D-alanine. Its pathway is amino-acid biosynthesis; D-alanine biosynthesis; D-alanine from L-alanine: step 1/1. Functionally, catalyzes the interconversion of L-alanine and D-alanine. May also act on other amino acids. The sequence is that of Alanine racemase (alr) from Helicobacter pylori (strain Shi470).